Reading from the N-terminus, the 302-residue chain is tRNA-cytidine(32) 2-sulfurtransferase (302 aa).

Positions 57 to 62 match the PP-loop motif motif; the sequence is SGGKDS. [4Fe-4S] cluster contacts are provided by cysteine 132, cysteine 135, and cysteine 223.

Belongs to the TtcA family. Homodimer. It depends on Mg(2+) as a cofactor. Requires [4Fe-4S] cluster as cofactor.

Its subcellular location is the cytoplasm. It carries out the reaction cytidine(32) in tRNA + S-sulfanyl-L-cysteinyl-[cysteine desulfurase] + AH2 + ATP = 2-thiocytidine(32) in tRNA + L-cysteinyl-[cysteine desulfurase] + A + AMP + diphosphate + H(+). It functions in the pathway tRNA modification. In terms of biological role, catalyzes the ATP-dependent 2-thiolation of cytidine in position 32 of tRNA, to form 2-thiocytidine (s(2)C32). The sulfur atoms are provided by the cysteine/cysteine desulfurase (IscS) system. This chain is tRNA-cytidine(32) 2-sulfurtransferase, found in Marinobacter nauticus (strain ATCC 700491 / DSM 11845 / VT8) (Marinobacter aquaeolei).